Here is a 379-residue protein sequence, read N- to C-terminus: Flagellar P-ring protein (379 aa).

An N-terminal signal peptide occupies residues 1–32 (MTAPAGFLPRVGRLIAVALTAVFLLAPTGAEA).

It belongs to the FlgI family. The basal body constitutes a major portion of the flagellar organelle and consists of four rings (L,P,S, and M) mounted on a central rod.

It localises to the periplasm. Its subcellular location is the bacterial flagellum basal body. In terms of biological role, assembles around the rod to form the L-ring and probably protects the motor/basal body from shearing forces during rotation. The polypeptide is Flagellar P-ring protein (Rhodospirillum rubrum (strain ATCC 11170 / ATH 1.1.1 / DSM 467 / LMG 4362 / NCIMB 8255 / S1)).